Consider the following 525-residue polypeptide: GMP synthase [glutamine-hydrolyzing] (525 aa).

A Glutamine amidotransferase type-1 domain is found at 9-207 (RILILDFGSQ…VRDICECEAL (199 aa)). Cys-86 functions as the Nucleophile in the catalytic mechanism. Residues His-181 and Glu-183 contribute to the active site. The GMPS ATP-PPase domain occupies 208-400 (WTPAKIIDDA…LGLPYDMLYR (193 aa)). 235–241 (SGGVDSS) is an ATP binding site.

As to quaternary structure, homodimer.

The catalysed reaction is XMP + L-glutamine + ATP + H2O = GMP + L-glutamate + AMP + diphosphate + 2 H(+). The protein operates within purine metabolism; GMP biosynthesis; GMP from XMP (L-Gln route): step 1/1. Catalyzes the synthesis of GMP from XMP. This Cronobacter sakazakii (strain ATCC BAA-894) (Enterobacter sakazakii) protein is GMP synthase [glutamine-hydrolyzing].